The following is a 233-amino-acid chain: Zinc import ATP-binding protein ZnuC (233 aa).

The ABC transporter domain occupies 6 to 222 (IEFRNVSKKF…SEFSNALSSL (217 aa)). 38–45 (GPNGAGKT) serves as a coordination point for ATP.

It belongs to the ABC transporter superfamily. Zinc importer (TC 3.A.1.15.5) family. In terms of assembly, the complex is composed of two ATP-binding proteins (ZnuC), two transmembrane proteins (ZnuB) and a solute-binding protein (ZnuA).

It localises to the cell inner membrane. It carries out the reaction Zn(2+)(out) + ATP(in) + H2O(in) = Zn(2+)(in) + ADP(in) + phosphate(in) + H(+)(in). Functionally, part of the ABC transporter complex ZnuABC involved in zinc import. Responsible for energy coupling to the transport system. The sequence is that of Zinc import ATP-binding protein ZnuC from Rickettsia prowazekii (strain Madrid E).